A 395-amino-acid chain; its full sequence is Elongation factor Tu (395 aa).

Positions 10 to 204 constitute a tr-type G domain; sequence KPHVNVGTIG…AVDAYIDTPL (195 aa). The tract at residues 19 to 26 is G1; it reads GHVDHGKT. Position 19-26 (19-26) interacts with GTP; the sequence is GHVDHGKT. Mg(2+) is bound at residue threonine 26. The G2 stretch occupies residues 60–64; that stretch reads GITIN. The G3 stretch occupies residues 81-84; sequence DCPG. GTP is bound by residues 81–85 and 136–139; these read DCPGH and NKAD. The tract at residues 136 to 139 is G4; that stretch reads NKAD. Positions 174–176 are G5; the sequence is SAL.

The protein belongs to the TRAFAC class translation factor GTPase superfamily. Classic translation factor GTPase family. EF-Tu/EF-1A subfamily. In terms of assembly, monomer.

The protein localises to the cytoplasm. The catalysed reaction is GTP + H2O = GDP + phosphate + H(+). GTP hydrolase that promotes the GTP-dependent binding of aminoacyl-tRNA to the A-site of ribosomes during protein biosynthesis. In Acholeplasma laidlawii (strain PG-8A), this protein is Elongation factor Tu.